A 247-amino-acid chain; its full sequence is Terpene cyclase ausL (247 aa).

The next 6 helical transmembrane spans lie at 49 to 69 (AIAVLPLCCDIAWEFTYAWIY), 75 to 95 (HWQGVVRVWFFLHTAVLAATL), 114 to 134 (LVLLYVAVIGAFAAGQLCLAL), 138 to 158 (GALGFHWGGALCQFLSSSGAV), 171 to 191 (SLVIWGARAISTAGGFVKLCI), and 206 to 226 (PMCWFYIGIVLSLDASYPVLY).

The protein belongs to the paxB family.

The protein localises to the membrane. It participates in secondary metabolite biosynthesis; terpenoid biosynthesis. In terms of biological role, terpene cyclase; part of the gene cluster that mediates the biosynthesis of calidodehydroaustin, a fungal meroterpenoid. The first step of the pathway is the synthesis of 3,5-dimethylorsellinic acid by the polyketide synthase ausA. 3,5-dimethylorsellinic acid is then prenylated by the polyprenyl transferase ausN. Further epoxidation by the FAD-dependent monooxygenase ausM and cyclization by the probable terpene cyclase ausL lead to the formation of protoaustinoid A. Protoaustinoid A is then oxidized to spiro-lactone preaustinoid A3 by the combined action of the FAD-binding monooxygenases ausB and ausC, and the dioxygenase ausE. Acid-catalyzed keto-rearrangement and ring contraction of the tetraketide portion of preaustinoid A3 by ausJ lead to the formation of preaustinoid A4. The aldo-keto reductase ausK, with the help of ausH, is involved in the next step by transforming preaustinoid A4 into isoaustinone which is in turn hydroxylated by the P450 monooxygenase ausI to form austinolide. The cytochrome P450 monooxygenase ausG modifies austinolide to austinol. Austinol is further acetylated to austin by the O-acetyltransferase ausP, which spontaneously changes to dehydroaustin. The cytochrome P450 monooxygenase ausR then converts dehydroaustin is into 7-dehydrodehydroaustin. The hydroxylation catalyzed by ausR permits the O-acetyltransferase ausQ to add an additional acetyl group to the molecule, leading to the formation of acetoxydehydroaustin. The short chain dehydrogenase ausT catalyzes the reduction of the double bond present between carbon atoms 1 and 2 to convert 7-dehydrodehydroaustin into 1,2-dihydro-7-hydroxydehydroaustin. AusQ catalyzes not only an acetylation reaction but also the addition of the PKS ausV diketide product to 1,2-dihydro-7-hydroxydehydroaustin, forming precalidodehydroaustin. Finally, the iron/alpha-ketoglutarate-dependent dioxygenase converts precalidodehydroaustin into calidodehydroaustin. In Aspergillus calidoustus, this protein is Terpene cyclase ausL.